Consider the following 628-residue polypeptide: Chaperone protein DnaK (628 aa).

Position 197 is a phosphothreonine; by autocatalysis (Thr-197). Positions 597-628 (EQMYKGEQGAQGGAADTSKKKSDDDVIDAEIE) are disordered.

The protein belongs to the heat shock protein 70 family.

In terms of biological role, acts as a chaperone. The chain is Chaperone protein DnaK from Sulfurimonas denitrificans (strain ATCC 33889 / DSM 1251) (Thiomicrospira denitrificans (strain ATCC 33889 / DSM 1251)).